A 377-amino-acid polypeptide reads, in one-letter code: N-acetyldiaminopimelate deacetylase (377 aa).

Residue Asp70 is part of the active site. Glu129 acts as the Proton acceptor in catalysis.

The protein belongs to the peptidase M20A family. N-acetyldiaminopimelate deacetylase subfamily.

It catalyses the reaction N-acetyl-(2S,6S)-2,6-diaminopimelate + H2O = (2S,6S)-2,6-diaminopimelate + acetate. It participates in amino-acid biosynthesis; L-lysine biosynthesis via DAP pathway; LL-2,6-diaminopimelate from (S)-tetrahydrodipicolinate (acetylase route): step 3/3. Functionally, catalyzes the conversion of N-acetyl-diaminopimelate to diaminopimelate and acetate. The polypeptide is N-acetyldiaminopimelate deacetylase (Geobacillus thermodenitrificans (strain NG80-2)).